The primary structure comprises 221 residues: Leucine rich adaptor protein 1-like (221 aa).

At methionine 1 the chain carries N-acetylmethionine. The disordered stretch occupies residues 24-81; sequence LARSLRGEELAPREGAADPSGVGGSCSSSSSCSSFAPSVSSSSSSSPASGSPRRSHPS. The segment covering 28–39 has biased composition (basic and acidic residues); the sequence is LRGEELAPREGA. Residues 48–75 are compositionally biased toward low complexity; that stretch reads SCSSSSSCSSFAPSVSSSSSSSPASGSP.

The chain is Leucine rich adaptor protein 1-like (Lurap1l) from Mus musculus (Mouse).